A 105-amino-acid chain; its full sequence is Large ribosomal subunit protein uL24 (105 aa).

Belongs to the universal ribosomal protein uL24 family. As to quaternary structure, part of the 50S ribosomal subunit.

Functionally, one of two assembly initiator proteins, it binds directly to the 5'-end of the 23S rRNA, where it nucleates assembly of the 50S subunit. In terms of biological role, one of the proteins that surrounds the polypeptide exit tunnel on the outside of the subunit. This chain is Large ribosomal subunit protein uL24, found in Tolumonas auensis (strain DSM 9187 / NBRC 110442 / TA 4).